The sequence spans 347 residues: D-alanine--D-alanine ligase (347 aa).

The ATP-grasp domain occupies 134–332 (KLYAKDLGIK…LAQSLPKTPK (199 aa)). 161 to 216 (LINFNFPFIIKPNSAGSSLGVSVVKEEKELNYALDSAFEYSKEVLIEPFIQGVKEY) lines the ATP pocket. D288, E300, and N302 together coordinate Mg(2+).

It belongs to the D-alanine--D-alanine ligase family. It depends on Mg(2+) as a cofactor. Requires Mn(2+) as cofactor.

It is found in the cytoplasm. It catalyses the reaction 2 D-alanine + ATP = D-alanyl-D-alanine + ADP + phosphate + H(+). It participates in cell wall biogenesis; peptidoglycan biosynthesis. Cell wall formation. The polypeptide is D-alanine--D-alanine ligase (Helicobacter pylori (strain HPAG1)).